The sequence spans 275 residues: Formamidopyrimidine-DNA glycosylase (275 aa).

The active-site Schiff-base intermediate with DNA is the proline 2. Glutamate 3 functions as the Proton donor in the catalytic mechanism. Lysine 58 (proton donor; for beta-elimination activity) is an active-site residue. The DNA site is built by histidine 93, arginine 111, and arginine 156. Residues 241-275 (FVYDRAGQPCRVCGTPIRQIVQGQRSTYYCPTCQR) form an FPG-type zinc finger. Arginine 265 serves as the catalytic Proton donor; for delta-elimination activity.

The protein belongs to the FPG family. Monomer. It depends on Zn(2+) as a cofactor.

It catalyses the reaction Hydrolysis of DNA containing ring-opened 7-methylguanine residues, releasing 2,6-diamino-4-hydroxy-5-(N-methyl)formamidopyrimidine.. The catalysed reaction is 2'-deoxyribonucleotide-(2'-deoxyribose 5'-phosphate)-2'-deoxyribonucleotide-DNA = a 3'-end 2'-deoxyribonucleotide-(2,3-dehydro-2,3-deoxyribose 5'-phosphate)-DNA + a 5'-end 5'-phospho-2'-deoxyribonucleoside-DNA + H(+). Involved in base excision repair of DNA damaged by oxidation or by mutagenic agents. Acts as a DNA glycosylase that recognizes and removes damaged bases. Has a preference for oxidized purines, such as 7,8-dihydro-8-oxoguanine (8-oxoG). Has AP (apurinic/apyrimidinic) lyase activity and introduces nicks in the DNA strand. Cleaves the DNA backbone by beta-delta elimination to generate a single-strand break at the site of the removed base with both 3'- and 5'-phosphates. The chain is Formamidopyrimidine-DNA glycosylase from Burkholderia cenocepacia (strain ATCC BAA-245 / DSM 16553 / LMG 16656 / NCTC 13227 / J2315 / CF5610) (Burkholderia cepacia (strain J2315)).